The following is a 3357-amino-acid chain: Versican core protein (3357 aa).

Residues 1–23 (MLINMKGILWMCSTLLLTHALHQ) form the signal peptide. Residues 24-146 (AKMETSPPVK…EDTQDTMSLA (123 aa)) form the Ig-like V-type domain. 5 disulfide bridges follow: C44-C130, C172-C243, C196-C217, C270-C333, and C294-C315. N-linked (GlcNAc...) asparagine glycosylation is present at N57. Link domains follow at residues 150–245 (VVFH…YCYV) and 251–347 (DVFH…YCFK). 3 N-linked (GlcNAc...) asparagine glycosylation sites follow: N330, N351, and N441. The interval 348-1308 (PKQNISEATT…IIEVRENKTG (961 aa)) is GAG-alpha (glucosaminoglycan attachment domain). Residues 625–634 (EPKTNGKVTE) are compositionally biased toward basic and acidic residues. The tract at residues 625 to 646 (EPKTNGKVTEDEFGQSQPTTTF) is disordered. O-linked (Xyl...) (chondroitin sulfate) serine glycosylation occurs at S660. Disordered regions lie at residues 801-863 (WPGD…KPLE) and 881-908 (TSTS…TTST). N807 is a glycosylation site (N-linked (GlcNAc...) asparagine). N914 and N951 each carry an N-linked (GlcNAc...) asparagine glycan. Disordered regions lie at residues 1010 to 1088 (SPGA…YPPG) and 1252 to 1288 (DHMT…PAAG). Polar residues-rich tracts occupy residues 1017–1042 (TGVS…SSTA) and 1275–1286 (SKTQELSTSTPA). N1305 and N1371 each carry an N-linked (GlcNAc...) asparagine glycan. The interval 1309–3051 (RLSDMIVSGH…VEGTAVYLPG (1743 aa)) is GAG-beta. Residues 1396-1406 (DPEAAEARRGQ) are compositionally biased toward basic and acidic residues. Disordered regions lie at residues 1396–1421 (DPEA…DSSA) and 1458–1524 (TYPE…AIEQ). 2 stretches are compositionally biased toward polar residues: residues 1411 to 1421 (APSQNFPDSSA) and 1487 to 1498 (WSESITESSPNL). 2 O-linked (Xyl...) (chondroitin sulfate) serine glycosylation sites follow: S1517 and S1599. Residues 1664-1705 (LPSPDARPTTVWNSNSTSEWVSDKSFEGRKKKENEDEEGAVN) are disordered. Polar residues predominate over residues 1673–1683 (TVWNSNSTSEW). N1678 carries an N-linked (GlcNAc...) asparagine glycan. Residues 1684–1697 (VSDKSFEGRKKKEN) show a composition bias toward basic and acidic residues. O-linked (Xyl...) (chondroitin sulfate) serine glycans are attached at residues S1907 and S1931. Residues 1926–1965 (VGMGGSDDERVRDTQTSSSIPTTSDNIYPVPDSKGPDSTV) are disordered. The segment covering 1939-1951 (TQTSSSIPTTSDN) has biased composition (polar residues). N-linked (GlcNAc...) asparagine glycosylation is present at N2053. O-linked (Xyl...) (chondroitin sulfate) serine glycans are attached at residues S2219 and S2226. N2243 is a glycosylation site (N-linked (GlcNAc...) asparagine). The segment covering 2308-2322 (TLSHTGTEEPTTSTL) has biased composition (polar residues). Disordered stretches follow at residues 2308–2374 (TLSH…ATSP) and 2475–2494 (YPTS…EGIE). Residue N2361 is glycosylated (N-linked (GlcNAc...) asparagine). The segment covering 2475 to 2486 (YPTSTLPSTEPY) has biased composition (low complexity). Phosphoserine occurs at positions 2585 and 2586. The N-linked (GlcNAc...) asparagine glycan is linked to N2626. S2696, S2697, and S2741 each carry an O-linked (Xyl...) (chondroitin sulfate) serine glycan. Residues 2853–2908 (LGGNVHRTEPPSMSRDPALDVSEDESKHKLLEELETSPTKPETSQDFPNKAKDHIP) form a disordered region. Over residues 2888-2899 (TSPTKPETSQDF) the composition is skewed to polar residues. N-linked (GlcNAc...) asparagine glycosylation occurs at N3029. The 37-residue stretch at 3051 to 3087 (GPDLCKTNPCLNGGTCYPTETSYVCTCAPGYSGDQCE) folds into the EGF-like 1 domain. Cystine bridges form between C3055–C3066, C3060–C3075, C3077–C3086, C3093–C3104, C3098–C3113, C3115–C3124, C3131–C3142, C3159–C3251, C3227–C3243, C3258–C3301, and C3287–C3314. The EGF-like 2; calcium-binding domain maps to 3089-3125 (DFDECHSNPCRNGATCVDGFNTFRCLCLPSYVGALCE). One can recognise a C-type lectin domain in the interval 3138 to 3252 (FQGQCYKYFA…CNYHLTYTCK (115 aa)). The Sushi domain maps to 3256–3316 (VACGQPPVVE…WAMPKITCMN (61 aa)). N3331 and N3341 each carry an N-linked (GlcNAc...) asparagine glycan. Residues 3331–3342 (NSSSAKDNSINT) are compositionally biased toward polar residues. The interval 3331–3357 (NSSSAKDNSINTSKHEHRWSRRQETRR) is disordered.

Belongs to the aggrecan/versican proteoglycan family. Interacts with FBLN1. In terms of processing, phosphorylated by FAM20C in the extracellular medium. Proteolytically cleaved by ADAMTS5 and ADAMTS15 in the pericellular matrix surrounding myoblasts, facilitating myoblast contact and fusion which is required for skeletal muscle development and regeneration. As to expression, expressed in the retina (at protein level). Isoform V2: Only expressed in brain.

It is found in the secreted. The protein resides in the extracellular space. It localises to the extracellular matrix. The protein localises to the cell projection. Its subcellular location is the cilium. It is found in the photoreceptor outer segment. The protein resides in the interphotoreceptor matrix. In terms of biological role, may play a role in intercellular signaling and in connecting cells with the extracellular matrix. May take part in the regulation of cell motility, growth and differentiation. Binds hyaluronic acid. The sequence is that of Versican core protein (Vcan) from Mus musculus (Mouse).